We begin with the raw amino-acid sequence, 63 residues long: Large ribosomal subunit protein uL29 (63 aa).

This sequence belongs to the universal ribosomal protein uL29 family.

The sequence is that of Large ribosomal subunit protein uL29 from Vibrio cholerae serotype O1 (strain ATCC 39541 / Classical Ogawa 395 / O395).